We begin with the raw amino-acid sequence, 353 residues long: Transcription termination/antitermination protein NusG (353 aa).

The 35-residue stretch at 301-335 (VGDMVKIISGPFEDFAGVIKEIDPERQELKVNVTI) folds into the KOW domain.

Belongs to the NusG family.

Its activity is regulated as follows. Regulated by autoinhibition via interaction of the N-terminal and the C-terminal domains. Autoinhibition may prevent NusG from interacting prematurely with other components of the transcription complex or non-specific interactions with other cellular components. Its function is as follows. Participates in transcription elongation, termination and antitermination. In Thermotoga maritima (strain ATCC 43589 / DSM 3109 / JCM 10099 / NBRC 100826 / MSB8), this protein is Transcription termination/antitermination protein NusG.